The sequence spans 417 residues: Gamma-glutamyl phosphate reductase (417 aa).

This sequence belongs to the gamma-glutamyl phosphate reductase family.

The protein resides in the cytoplasm. It catalyses the reaction L-glutamate 5-semialdehyde + phosphate + NADP(+) = L-glutamyl 5-phosphate + NADPH + H(+). Its pathway is amino-acid biosynthesis; L-proline biosynthesis; L-glutamate 5-semialdehyde from L-glutamate: step 2/2. Catalyzes the NADPH-dependent reduction of L-glutamate 5-phosphate into L-glutamate 5-semialdehyde and phosphate. The product spontaneously undergoes cyclization to form 1-pyrroline-5-carboxylate. This Escherichia coli O17:K52:H18 (strain UMN026 / ExPEC) protein is Gamma-glutamyl phosphate reductase.